Consider the following 274-residue polypeptide: Formamidopyrimidine-DNA glycosylase (274 aa).

Pro2 serves as the catalytic Schiff-base intermediate with DNA. Glu3 functions as the Proton donor in the catalytic mechanism. Lys60 acts as the Proton donor; for beta-elimination activity in catalysis. DNA contacts are provided by His93 and Arg112. The FPG-type zinc-finger motif lies at 240 to 274 (FVYGRKGEPCKRCGTPIEKTVVAGRGTHYCPRCQR). The Proton donor; for delta-elimination activity role is filled by Arg264.

The protein belongs to the FPG family. Monomer. Requires Zn(2+) as cofactor.

The catalysed reaction is Hydrolysis of DNA containing ring-opened 7-methylguanine residues, releasing 2,6-diamino-4-hydroxy-5-(N-methyl)formamidopyrimidine.. It carries out the reaction 2'-deoxyribonucleotide-(2'-deoxyribose 5'-phosphate)-2'-deoxyribonucleotide-DNA = a 3'-end 2'-deoxyribonucleotide-(2,3-dehydro-2,3-deoxyribose 5'-phosphate)-DNA + a 5'-end 5'-phospho-2'-deoxyribonucleoside-DNA + H(+). Its function is as follows. Involved in base excision repair of DNA damaged by oxidation or by mutagenic agents. Acts as a DNA glycosylase that recognizes and removes damaged bases. Has a preference for oxidized purines, such as 7,8-dihydro-8-oxoguanine (8-oxoG). Has AP (apurinic/apyrimidinic) lyase activity and introduces nicks in the DNA strand. Cleaves the DNA backbone by beta-delta elimination to generate a single-strand break at the site of the removed base with both 3'- and 5'-phosphates. The polypeptide is Formamidopyrimidine-DNA glycosylase (Geobacillus kaustophilus (strain HTA426)).